We begin with the raw amino-acid sequence, 376 residues long: MNKTLKLAKNLVSIDSITPQDKGCQSIMTNHLSHLNFKITDLKFGEVDNFWAIRGHQSPVFVFAGHTDVVPVGDELKWHISPFSAQVQDGMLHGRGTADMKGSLAAMLSATDRFVKDYPNHKGSIGYLITSDEEGPATDGTVKVAKYLKEINQIVDYCLVGEPSATNELGDVIKNGRRGSLNGILKIIGKQGHIAYPHLADNPIHLAISALNDLCNEVWDKGNEYFPATSFQISNIHSGTGVTNIIPGESDVVLNFRYSTQNTHKQLQSRVCVILNKHNFEYQITWEHSGYPFLTPKGKLVNACTNAIKTVKNINTQLSTSGGTSDGRFIALILKAQVVELGPLNATIHQVDECVSIQDLEDLSDIYYHVLKNILT.

His66 contributes to the Zn(2+) binding site. Residue Asp68 is part of the active site. Asp99 is a Zn(2+) binding site. Glu133 functions as the Proton acceptor in the catalytic mechanism. Zn(2+) contacts are provided by Glu134, Glu162, and His349.

It belongs to the peptidase M20A family. DapE subfamily. In terms of assembly, homodimer. Zn(2+) is required as a cofactor. Requires Co(2+) as cofactor.

The enzyme catalyses N-succinyl-(2S,6S)-2,6-diaminopimelate + H2O = (2S,6S)-2,6-diaminopimelate + succinate. It participates in amino-acid biosynthesis; L-lysine biosynthesis via DAP pathway; LL-2,6-diaminopimelate from (S)-tetrahydrodipicolinate (succinylase route): step 3/3. Functionally, catalyzes the hydrolysis of N-succinyl-L,L-diaminopimelic acid (SDAP), forming succinate and LL-2,6-diaminopimelate (DAP), an intermediate involved in the bacterial biosynthesis of lysine and meso-diaminopimelic acid, an essential component of bacterial cell walls. The protein is Succinyl-diaminopimelate desuccinylase of Ruthia magnifica subsp. Calyptogena magnifica.